The chain runs to 196 residues: MAQLYFYYSAMNAGKSTALLQSSYNYQERGMRTLVFTAEIDNRFGVGTVSSRIGLSSQAQLYNSGTSLLSIIAAEHQDTPIHCILLDECQFLTKEQVQELCQVVDELHLPVLCYGLRTDFLGELFPGSKYLLAWADKLVELKTICHCGRKANMVLRLDEQGRAVHNGEQVVIGGNESYVSVCRRHYKEAIKAACCS.

ATP is bound by residues 9–16 and 87–90; these read SAMNAGKS and DECQ. The active-site Proton acceptor is the Glu-88. Zn(2+) contacts are provided by Cys-145, Cys-147, Cys-182, and His-185.

It belongs to the thymidine kinase family. Homotetramer.

Its subcellular location is the cytoplasm. The catalysed reaction is thymidine + ATP = dTMP + ADP + H(+). This is Thymidine kinase from Yersinia pestis.